Consider the following 491-residue polypeptide: Ubiquitin carboxyl-terminal hydrolase 30 (491 aa).

At 1-31 the chain is on the mitochondrial intermembrane side; sequence MPWCKQGTTDKLVREFLRTGAAARNKMMKNW. The helical transmembrane segment at 32–52 threads the bilayer; it reads GVIGGIAAAMAAGVYVLWGPI. Residues 53-491 lie on the Cytoplasmic side of the membrane; that stretch reads SDRRKKRKGM…MQRPGLRVEE (439 aa). The USP domain maps to 64–482; it reads PGLLNLGNTC…SAYLLFYERM (419 aa). Cysteine 73 (nucleophile) is an active-site residue. Polar residues predominate over residues 346–355; sequence AQSQQKTSRT. The interval 346 to 365 is disordered; sequence AQSQQKTSRTNKAKASADPK. The active-site Proton acceptor is the histidine 432.

Belongs to the peptidase C19 family.

It localises to the mitochondrion outer membrane. It carries out the reaction Thiol-dependent hydrolysis of ester, thioester, amide, peptide and isopeptide bonds formed by the C-terminal Gly of ubiquitin (a 76-residue protein attached to proteins as an intracellular targeting signal).. Deubiquitinating enzyme that acts as a key inhibitor of mitophagy by counteracting the action of parkin (PRKN). This chain is Ubiquitin carboxyl-terminal hydrolase 30 (usp30), found in Danio rerio (Zebrafish).